The chain runs to 81 residues: CLAVATA3/ESR (CLE)-related protein 5 (81 aa).

Positions 1–26 (MATLILKQTLIILLIIFSLQTLSSQA) are cleaved as a signal peptide. Residues proline 73 and proline 76 each carry the hydroxyproline modification. An O-linked (Ara...) hydroxyproline glycan is attached at proline 76.

Belongs to the CLV3/ESR signal peptide family. In terms of processing, the O-glycosylation (arabinosylation) of the hydroxyproline Pro-76 enhances binding affinity of the CLE5p peptide for its receptor. Mostly expressed in roots, and, to a lower extent, in seedlings, stems, apex, flowers and siliques.

The protein resides in the secreted. The protein localises to the extracellular space. Extracellular signal peptide that regulates cell fate. This chain is CLAVATA3/ESR (CLE)-related protein 5, found in Arabidopsis thaliana (Mouse-ear cress).